Here is a 177-residue protein sequence, read N- to C-terminus: ATP synthase subunit delta (177 aa).

The protein belongs to the ATPase delta chain family. As to quaternary structure, F-type ATPases have 2 components, F(1) - the catalytic core - and F(0) - the membrane proton channel. F(1) has five subunits: alpha(3), beta(3), gamma(1), delta(1), epsilon(1). F(0) has three main subunits: a(1), b(2) and c(10-14). The alpha and beta chains form an alternating ring which encloses part of the gamma chain. F(1) is attached to F(0) by a central stalk formed by the gamma and epsilon chains, while a peripheral stalk is formed by the delta and b chains.

It localises to the cell inner membrane. In terms of biological role, f(1)F(0) ATP synthase produces ATP from ADP in the presence of a proton or sodium gradient. F-type ATPases consist of two structural domains, F(1) containing the extramembraneous catalytic core and F(0) containing the membrane proton channel, linked together by a central stalk and a peripheral stalk. During catalysis, ATP synthesis in the catalytic domain of F(1) is coupled via a rotary mechanism of the central stalk subunits to proton translocation. Functionally, this protein is part of the stalk that links CF(0) to CF(1). It either transmits conformational changes from CF(0) to CF(1) or is implicated in proton conduction. This chain is ATP synthase subunit delta, found in Escherichia coli O81 (strain ED1a).